A 1039-amino-acid polypeptide reads, in one-letter code: Antigen 43 (1039 aa).

An N-terminal signal peptide occupies residues 1 to 52; the sequence is MKRHLNTCYRLVWNHMTGAFVVASELARARGKRGGVAVALSLAAVTSLPVLA. Positions 737–1039 constitute an Autotransporter domain; that stretch reads VNGENNSVRL…NGQATLNVTF (303 aa).

Interaction with TamA of the translocation and assembly module (TAM) initiates insertion in the outer membrane.

The protein resides in the periplasm. It localises to the secreted. It is found in the cell surface. The protein localises to the cell outer membrane. Functionally, controls colony form variation and autoaggregation. May function as an adhesin. The protein is Antigen 43 (flu) of Escherichia coli (strain K12).